We begin with the raw amino-acid sequence, 229 residues long: Ribonuclease 3 (229 aa).

One can recognise an RNase III domain in the interval 7 to 132 (LKAFEGRIGH…VIAAVYLDAG (126 aa)). Position 45 (E45) interacts with Mg(2+). D49 is a catalytic residue. Mg(2+) is bound by residues D118 and E121. E121 is a catalytic residue. Residues 157-226 (DAKTALQEWA…ARALLARMEA (70 aa)) enclose the DRBM domain.

It belongs to the ribonuclease III family. Homodimer. Requires Mg(2+) as cofactor.

Its subcellular location is the cytoplasm. The enzyme catalyses Endonucleolytic cleavage to 5'-phosphomonoester.. Digests double-stranded RNA. Involved in the processing of primary rRNA transcript to yield the immediate precursors to the large and small rRNAs (23S and 16S). Processes some mRNAs, and tRNAs when they are encoded in the rRNA operon. Processes pre-crRNA and tracrRNA of type II CRISPR loci if present in the organism. This chain is Ribonuclease 3, found in Cereibacter sphaeroides (strain ATCC 17029 / ATH 2.4.9) (Rhodobacter sphaeroides).